Reading from the N-terminus, the 314-residue chain is Nodulation protein D 1 (314 aa).

Residues 6–63 enclose the HTH lysR-type domain; sequence LDLNLLVALDAVMTARNLTAAARKINLSQPAMSAAIARLRTYFRDELFTMRGRELVPT. Residues 23–42 constitute a DNA-binding region (H-T-H motif); it reads LTAAARKINLSQPAMSAAIA.

Belongs to the LysR transcriptional regulatory family.

NodD regulates the expression of the nodABCFE genes which encode other nodulation proteins. NodD is also a negative regulator of its own expression. Binds flavonoids as inducers. The chain is Nodulation protein D 1 (nodD1) from Bradyrhizobium diazoefficiens (strain JCM 10833 / BCRC 13528 / IAM 13628 / NBRC 14792 / USDA 110).